The primary structure comprises 505 residues: Protein dml1 (505 aa).

The tract at residues 330–358 is disordered; sequence LPEDMSNHTQPVQNPEDRRTQASKGGSSK.

Belongs to the misato family.

The protein localises to the mitochondrion. Its function is as follows. Involved in the partitioning of the mitochondrial organelle and mitochondrial DNA (mtDNA) inheritance. The protein is Protein dml1 (dml1) of Aspergillus fumigatus (strain ATCC MYA-4609 / CBS 101355 / FGSC A1100 / Af293) (Neosartorya fumigata).